A 479-amino-acid chain; its full sequence is MPPALRVRFAPSPTGYLHIGGARTALMNFLQARRQGGTFVLRMEDTDQGRSTPESVQAILDGLNWLGIDWDEGPGKEGPYAPYFQMQRLDTYRKHADQLIAEGKAYRCYCTKEDLDAQRQVAEKAGGAFKYPGTCRERTEPPAGRNAADAVIRFKMPAGDGSVSFTDKALGTITKTHSDLDDWVMMRADGIPVYNFGCVIDDHLMDITLVARGQEHVNSTFPQLMLYQALGWTPPDFAHLPLILGPDREKLSKRKHPEADVMVHKRNGVMPEALLNFVIRLGWSHGNDEVISREQMLEWFDFSDVGTTSGVWNPEKLLWLNQQWMKQLPVETVVERLLPFLEAKGIQAKGDPRLETLVRTLRERSNTLEDIATTAANVYFRSGITLDEKAATKHLSGESLNLLRKVRETLTALPEWSVEALDGVVKQVSEASSVGMGKVAQPIRVALTGNTTSPGIGETLVLVGRDESLLRIDAALTRG.

The short motif at 11-21 (PSPTGYLHIGG) is the 'HIGH' region element. Residues Cys108, Cys110, Cys135, and Glu137 each contribute to the Zn(2+) site. A 'KMSKS' region motif is present at residues 250–254 (KLSKR). Lys253 lines the ATP pocket.

Belongs to the class-I aminoacyl-tRNA synthetase family. Glutamate--tRNA ligase type 1 subfamily. Monomer. It depends on Zn(2+) as a cofactor.

It localises to the cytoplasm. The enzyme catalyses tRNA(Glu) + L-glutamate + ATP = L-glutamyl-tRNA(Glu) + AMP + diphosphate. Its function is as follows. Catalyzes the attachment of glutamate to tRNA(Glu) in a two-step reaction: glutamate is first activated by ATP to form Glu-AMP and then transferred to the acceptor end of tRNA(Glu). This chain is Glutamate--tRNA ligase, found in Myxococcus xanthus (strain DK1622).